We begin with the raw amino-acid sequence, 388 residues long: S-adenosylmethionine synthase (388 aa).

Histidine 16 provides a ligand contact to ATP. Aspartate 18 serves as a coordination point for Mg(2+). Residue glutamate 44 participates in K(+) binding. Positions 57 and 100 each coordinate L-methionine. The flexible loop stretch occupies residues 100–110 (QSPEIAQGVDR). ATP-binding positions include 165–167 (DAK), aspartate 240, 246–247 (RK), alanine 263, and lysine 267. Aspartate 240 serves as a coordination point for L-methionine. L-methionine is bound at residue lysine 271.

This sequence belongs to the AdoMet synthase family. As to quaternary structure, homotetramer; dimer of dimers. It depends on Mg(2+) as a cofactor. The cofactor is K(+).

It is found in the cytoplasm. The catalysed reaction is L-methionine + ATP + H2O = S-adenosyl-L-methionine + phosphate + diphosphate. It participates in amino-acid biosynthesis; S-adenosyl-L-methionine biosynthesis; S-adenosyl-L-methionine from L-methionine: step 1/1. In terms of biological role, catalyzes the formation of S-adenosylmethionine (AdoMet) from methionine and ATP. The overall synthetic reaction is composed of two sequential steps, AdoMet formation and the subsequent tripolyphosphate hydrolysis which occurs prior to release of AdoMet from the enzyme. In Acinetobacter baumannii (strain ACICU), this protein is S-adenosylmethionine synthase.